A 183-amino-acid polypeptide reads, in one-letter code: Acireductone dioxygenase (183 aa).

Residues 1–21 (MVQAWYMDSDTTTDQREEHQL) form a disordered region. Histidine 90, histidine 92, glutamate 96, and histidine 135 together coordinate Fe(2+). Residues histidine 90, histidine 92, glutamate 96, and histidine 135 each contribute to the Ni(2+) site.

It belongs to the acireductone dioxygenase (ARD) family. Requires Fe(2+) as cofactor. The cofactor is Ni(2+).

The protein localises to the cytoplasm. It localises to the nucleus. It catalyses the reaction 1,2-dihydroxy-5-(methylsulfanyl)pent-1-en-3-one + O2 = 4-methylsulfanyl-2-oxobutanoate + formate + 2 H(+). The enzyme catalyses 1,2-dihydroxy-5-(methylsulfanyl)pent-1-en-3-one + O2 = 3-(methylsulfanyl)propanoate + CO + formate + 2 H(+). The protein operates within amino-acid biosynthesis; L-methionine biosynthesis via salvage pathway; L-methionine from S-methyl-5-thio-alpha-D-ribose 1-phosphate: step 5/6. Catalyzes 2 different reactions between oxygen and the acireductone 1,2-dihydroxy-3-keto-5-methylthiopentene (DHK-MTPene) depending upon the metal bound in the active site. Fe-containing acireductone dioxygenase (Fe-ARD) produces formate and 2-keto-4-methylthiobutyrate (KMTB), the alpha-ketoacid precursor of methionine in the methionine recycle pathway. Ni-containing acireductone dioxygenase (Ni-ARD) produces methylthiopropionate, carbon monoxide and formate, and does not lie on the methionine recycle pathway. The chain is Acireductone dioxygenase from Ixodes scapularis (Black-legged tick).